A 256-amino-acid chain; its full sequence is Floral homeotic protein APETALA 1 (256 aa).

Residues 1-61 (MGRGRVQLKR…GKLFEYSTDS (61 aa)) form the MADS-box domain. A K-box domain is found at 88–178 (NTNWSMEYNR…SKQIKEREKV (91 aa)). The tract at residues 180 to 206 (RAQQEQWDQQNHGQNMPPPPPPQEHQI) is disordered.

Homodimer capable of binding to CArG-box sequences.

The protein localises to the nucleus. In terms of biological role, transcription factor that promotes early floral meristem identity in synergy with LEAFY. Displays a redundant function with CAULIFLOWER in the up-regulation of LEAFY. Required subsequently for the transition of an inflorescence meristem into a floral meristem, and for the normal development of sepals and petals in flowers. Regulates positively B class homeotic proteins. This Brassica rapa subsp. pekinensis (Chinese cabbage) protein is Floral homeotic protein APETALA 1 (AP1).